A 302-amino-acid polypeptide reads, in one-letter code: Actin maturation protease (302 aa).

The disordered stretch occupies residues 1–26; the sequence is MPHTNEDPTAQQAGVILDPPPPLPPP. The tract at residues 85 to 205 is peptidase C39-like; it reads SLIQEGPQCG…WAVISGVLFG (121 aa). C93 is an active-site residue.

The protein belongs to the ACTMAP family.

The protein resides in the cytoplasm. It catalyses the reaction N-terminal N(alpha)-acetyl-L-methionyl-L-aspartyl-[protein] + H2O = N-terminal L-aspartyl-[protein] + N-acetyl-L-methionine. It carries out the reaction N-terminal N(alpha)-acetyl-L-methionyl-L-glutamyl-[protein] + H2O = N-terminal L-glutamyl-[protein] + N-acetyl-L-methionine. The catalysed reaction is N-terminal N(alpha)-acetyl-L-cysteinyl-L-aspartyl-[protein] + H2O = N-terminal L-aspartyl-[protein] + N-acetyl-L-cysteine. The enzyme catalyses N-terminal N(alpha)-acetyl-L-cysteinyl-L-glutamyl-[protein] + H2O = N-terminal L-glutamyl-[protein] + N-acetyl-L-cysteine. Functionally, actin maturation protease that specifically mediates the cleavage of immature acetylated N-terminal actin, thereby contributing to actin maturation. Cleaves N-terminal acetylated methionine of immature cytoplasmic beta- and gamma-actin after translation. Cleaves N-terminal acetylated cysteine of muscle alpha-actin after canonical removal of N-terminal methionine. The sequence is that of Actin maturation protease from Xenopus tropicalis (Western clawed frog).